The sequence spans 184 residues: ATP synthase subunit delta (184 aa).

It belongs to the ATPase delta chain family. In terms of assembly, F-type ATPases have 2 components, F(1) - the catalytic core - and F(0) - the membrane proton channel. F(1) has five subunits: alpha(3), beta(3), gamma(1), delta(1), epsilon(1). F(0) has three main subunits: a(1), b(2) and c(10-14). The alpha and beta chains form an alternating ring which encloses part of the gamma chain. F(1) is attached to F(0) by a central stalk formed by the gamma and epsilon chains, while a peripheral stalk is formed by the delta and b chains.

Its subcellular location is the cell membrane. Its function is as follows. F(1)F(0) ATP synthase produces ATP from ADP in the presence of a proton or sodium gradient. F-type ATPases consist of two structural domains, F(1) containing the extramembraneous catalytic core and F(0) containing the membrane proton channel, linked together by a central stalk and a peripheral stalk. During catalysis, ATP synthesis in the catalytic domain of F(1) is coupled via a rotary mechanism of the central stalk subunits to proton translocation. Functionally, this protein is part of the stalk that links CF(0) to CF(1). It either transmits conformational changes from CF(0) to CF(1) or is implicated in proton conduction. This chain is ATP synthase subunit delta, found in Christiangramia forsetii (strain DSM 17595 / CGMCC 1.15422 / KT0803) (Gramella forsetii).